We begin with the raw amino-acid sequence, 180 residues long: MTRKSIAIDMDEVLADTLGEIIDAVNFRADLGIKMEALNGQKLKHVIPEHDGLITEVLREPGFFRHLKVMPHAQEVVKKLTEHYDVYIATAAMDVPTSFSDKYEWLLEFFPFLDPQHFVFCGRKNIVKADYLIDDNPRQLEIFTGTPIMFTAVHNINDDRFERVNSWKDVEQYFLDNIEK.

The Nucleophile role is filled by D9. 3 residues coordinate Mg(2+): D9, D11, and D135. D11 functions as the Proton donor in the catalytic mechanism.

Belongs to the 5'(3')-deoxyribonucleotidase family. The cofactor is Mg(2+).

Its function is as follows. Dephosphorylates the 5' and 2'(3')-phosphates of deoxyribonucleotides. The sequence is that of Putative 5'(3')-deoxyribonucleotidase from Staphylococcus aureus (strain Mu50 / ATCC 700699).